A 269-amino-acid chain; its full sequence is Histone doublet H2B-H2A (269 aa).

Residues Met-1–Lys-168 are histone fold. A disordered region spans residues Arg-210–Ala-249. Over residues Pro-224–Lys-241 the composition is skewed to basic residues.

The protein resides in the host nucleus. The protein localises to the host cytoplasm. It localises to the virion. In terms of biological role, histone-like protein that is recruited to viral factories during viral replication and participates in viral DNA packaging and virion production probably by forming unstable nucleosome-like particles. May compact the viral DNA. This is Histone doublet H2B-H2A from Melbournevirus (MelV).